The chain runs to 102 residues: Urease subunit beta (102 aa).

The protein belongs to the urease beta subunit family. In terms of assembly, heterotrimer of UreA (gamma), UreB (beta) and UreC (alpha) subunits. Three heterotrimers associate to form the active enzyme.

The protein resides in the cytoplasm. It catalyses the reaction urea + 2 H2O + H(+) = hydrogencarbonate + 2 NH4(+). Its pathway is nitrogen metabolism; urea degradation; CO(2) and NH(3) from urea (urease route): step 1/1. This chain is Urease subunit beta, found in Methylibium petroleiphilum (strain ATCC BAA-1232 / LMG 22953 / PM1).